The sequence spans 264 residues: ATP synthase subunit a (264 aa).

5 helical membrane-spanning segments follow: residues 39–59, 97–117, 139–159, 205–225, and 239–259; these read LDTL…FYIV, VAPL…MDLV, TADP…VIFY, LFGN…LPWW, and LLVI…YISL.

Belongs to the ATPase A chain family. As to quaternary structure, F-type ATPases have 2 components, CF(1) - the catalytic core - and CF(0) - the membrane proton channel. CF(1) has five subunits: alpha(3), beta(3), gamma(1), delta(1), epsilon(1). CF(0) has three main subunits: a(1), b(2) and c(9-12). The alpha and beta chains form an alternating ring which encloses part of the gamma chain. CF(1) is attached to CF(0) by a central stalk formed by the gamma and epsilon chains, while a peripheral stalk is formed by the delta and b chains.

It is found in the cell inner membrane. Its function is as follows. Key component of the proton channel; it plays a direct role in the translocation of protons across the membrane. This chain is ATP synthase subunit a, found in Coxiella burnetii (strain CbuK_Q154) (Coxiella burnetii (strain Q154)).